The primary structure comprises 204 residues: GTP cyclohydrolase-2 (204 aa).

49-53 (RIHSE) serves as a coordination point for GTP. Zn(2+) contacts are provided by cysteine 54, cysteine 65, and cysteine 67. GTP is bound by residues glutamine 70, 92–94 (EGR), and threonine 114. Aspartate 126 (proton acceptor) is an active-site residue. Arginine 128 acts as the Nucleophile in catalysis. Residues threonine 149 and lysine 154 each coordinate GTP.

This sequence belongs to the GTP cyclohydrolase II family. It depends on Zn(2+) as a cofactor.

It catalyses the reaction GTP + 4 H2O = 2,5-diamino-6-hydroxy-4-(5-phosphoribosylamino)-pyrimidine + formate + 2 phosphate + 3 H(+). It participates in cofactor biosynthesis; riboflavin biosynthesis; 5-amino-6-(D-ribitylamino)uracil from GTP: step 1/4. In terms of biological role, catalyzes the conversion of GTP to 2,5-diamino-6-ribosylamino-4(3H)-pyrimidinone 5'-phosphate (DARP), formate and pyrophosphate. The sequence is that of GTP cyclohydrolase-2 from Shewanella baltica (strain OS223).